Reading from the N-terminus, the 82-residue chain is Sec-independent protein translocase protein TatA (82 aa).

Residues Met1 to Gly21 form a helical membrane-spanning segment. Residues Gly43–Gly82 are disordered.

Belongs to the TatA/E family. The Tat system comprises two distinct complexes: a TatABC complex, containing multiple copies of TatA, TatB and TatC subunits, and a separate TatA complex, containing only TatA subunits. Substrates initially bind to the TatABC complex, which probably triggers association of the separate TatA complex to form the active translocon.

The protein localises to the cell inner membrane. Functionally, part of the twin-arginine translocation (Tat) system that transports large folded proteins containing a characteristic twin-arginine motif in their signal peptide across membranes. TatA could form the protein-conducting channel of the Tat system. The sequence is that of Sec-independent protein translocase protein TatA from Methylocella silvestris (strain DSM 15510 / CIP 108128 / LMG 27833 / NCIMB 13906 / BL2).